The following is a 483-amino-acid chain: NADH-quinone oxidoreductase subunit N (483 aa).

13 helical membrane-spanning segments follow: residues 13–33 (PALPEILLAVGAMALLMYGVF), 45–65 (GALALFALVGAFLIIEPNAYV), 80–100 (FMKLLILLAAAAAIVMSLTFI), 111–131 (PVLIILATLGMFMMVSANGLI), 165–185 (FVLGALASGMLLYGASLIYGF), 205–225 (IGVIFGIVFVLAGLAFKISAV), 244–264 (AFFAGAPKVAAMALILRVLFV), 276–296 (IIVFIAIASMVLGAFAAIGQS), 301–321 (LMAYSSISHMGFAMVGLAAGT), 328–348 (VLIYLVIYVVMNAGVFCCILA), 373–393 (AFMMAMLMFSLAGVPPLAGFF), 407–429 (LYPLAVIGVLASVVGAFYYLRIV), and 452–472 (VLGISGVFTLFFFVYPAPLIL).

Belongs to the complex I subunit 2 family. NDH-1 is composed of 14 different subunits. Subunits NuoA, H, J, K, L, M, N constitute the membrane sector of the complex.

It is found in the cell inner membrane. It catalyses the reaction a quinone + NADH + 5 H(+)(in) = a quinol + NAD(+) + 4 H(+)(out). NDH-1 shuttles electrons from NADH, via FMN and iron-sulfur (Fe-S) centers, to quinones in the respiratory chain. The immediate electron acceptor for the enzyme in this species is believed to be ubiquinone. Couples the redox reaction to proton translocation (for every two electrons transferred, four hydrogen ions are translocated across the cytoplasmic membrane), and thus conserves the redox energy in a proton gradient. In Parvibaculum lavamentivorans (strain DS-1 / DSM 13023 / NCIMB 13966), this protein is NADH-quinone oxidoreductase subunit N.